The primary structure comprises 231 residues: Ribonuclease 3 (231 aa).

The RNase III domain maps to 7-135 (IQAIESKLNF…ILGAVYLDGG (129 aa)). Position 48 (Glu48) interacts with Mg(2+). Asp52 is a catalytic residue. Mg(2+) is bound by residues Asn121 and Glu124. Glu124 is an active-site residue. Residues 160–229 (NPKNRLQQFT…AKQALSTHDN (70 aa)) form the DRBM domain.

The protein belongs to the ribonuclease III family. In terms of assembly, homodimer. The cofactor is Mg(2+).

The protein resides in the cytoplasm. It catalyses the reaction Endonucleolytic cleavage to 5'-phosphomonoester.. Functionally, digests double-stranded RNA. Involved in the processing of primary rRNA transcript to yield the immediate precursors to the large and small rRNAs (23S and 16S). Processes some mRNAs, and tRNAs when they are encoded in the rRNA operon. Processes pre-crRNA and tracrRNA of type II CRISPR loci if present in the organism. The chain is Ribonuclease 3 from Chlamydia trachomatis serovar A (strain ATCC VR-571B / DSM 19440 / HAR-13).